A 175-amino-acid polypeptide reads, in one-letter code: MPETPASDLVRSLLLTVPDFPQPGILFRDLTPVLADGPALRAVVDDLVAACGPVDAVAGVEARGFLLAAAAAYASGVGTLAVRKAGKLPGEVLRETYALEYGEAAIELHPGQLAPGSRVLLLDDVLATGGTLEAAARLLERAGYEVAGIGVVLELADLGGRERLAGHDVRAILTL.

The protein belongs to the purine/pyrimidine phosphoribosyltransferase family. As to quaternary structure, homodimer.

The protein resides in the cytoplasm. It carries out the reaction AMP + diphosphate = 5-phospho-alpha-D-ribose 1-diphosphate + adenine. Its pathway is purine metabolism; AMP biosynthesis via salvage pathway; AMP from adenine: step 1/1. Catalyzes a salvage reaction resulting in the formation of AMP, that is energically less costly than de novo synthesis. The protein is Adenine phosphoribosyltransferase of Clavibacter michiganensis subsp. michiganensis (strain NCPPB 382).